The sequence spans 183 residues: MIVAIEGIVSKKEPTFVVLKTSSGVSYGVYVSLFCSGNFEKDQKIELSITQIIKEDSHKLYGFLDTNEQRMFELLIKISGIGATTAMALCSSLDTNTFYTALQSGDESVFKKVPGIGPKSAKRIIAELSDAKINIENSNQDHAQALAALLSLGFKQENILKVLRTCESQNTSELIKEALKKLA.

The domain I stretch occupies residues 1–64; sequence MIVAIEGIVS…EDSHKLYGFL (64 aa). The domain II stretch occupies residues 65 to 138; that stretch reads DTNEQRMFEL…SDAKINIENS (74 aa). Residue serine 138 is a region of interest, flexible linker. The domain III stretch occupies residues 138-183; sequence SNQDHAQALAALLSLGFKQENILKVLRTCESQNTSELIKEALKKLA.

The protein belongs to the RuvA family. As to quaternary structure, homotetramer. Forms an RuvA(8)-RuvB(12)-Holliday junction (HJ) complex. HJ DNA is sandwiched between 2 RuvA tetramers; dsDNA enters through RuvA and exits via RuvB. An RuvB hexamer assembles on each DNA strand where it exits the tetramer. Each RuvB hexamer is contacted by two RuvA subunits (via domain III) on 2 adjacent RuvB subunits; this complex drives branch migration. In the full resolvosome a probable DNA-RuvA(4)-RuvB(12)-RuvC(2) complex forms which resolves the HJ.

It is found in the cytoplasm. Its function is as follows. The RuvA-RuvB-RuvC complex processes Holliday junction (HJ) DNA during genetic recombination and DNA repair, while the RuvA-RuvB complex plays an important role in the rescue of blocked DNA replication forks via replication fork reversal (RFR). RuvA specifically binds to HJ cruciform DNA, conferring on it an open structure. The RuvB hexamer acts as an ATP-dependent pump, pulling dsDNA into and through the RuvAB complex. HJ branch migration allows RuvC to scan DNA until it finds its consensus sequence, where it cleaves and resolves the cruciform DNA. This is Holliday junction branch migration complex subunit RuvA from Campylobacter lari (strain RM2100 / D67 / ATCC BAA-1060).